A 435-amino-acid polypeptide reads, in one-letter code: Putative BTB/POZ domain-containing protein L275 (435 aa).

The 70-residue stretch at tyrosine 80–asparagine 149 folds into the BTB domain.

Belongs to the mimivirus BTB/WD family.

This chain is Putative BTB/POZ domain-containing protein L275, found in Acanthamoeba polyphaga mimivirus (APMV).